The sequence spans 121 residues: Large ribosomal subunit protein uL14 (121 aa).

Belongs to the universal ribosomal protein uL14 family. In terms of assembly, part of the 50S ribosomal subunit. Forms a cluster with proteins L3 and L19. In the 70S ribosome, L14 and L19 interact and together make contacts with the 16S rRNA in bridges B5 and B8.

In terms of biological role, binds to 23S rRNA. Forms part of two intersubunit bridges in the 70S ribosome. The polypeptide is Large ribosomal subunit protein uL14 (Legionella pneumophila (strain Paris)).